The chain runs to 291 residues: Pre-mRNA-splicing factor SPP381 (291 aa).

Disordered regions lie at residues 1 to 99 and 239 to 266; these read MSFR…PLPR and EKEK…YKIT. Composition is skewed to polar residues over residues 28–41 and 52–62; these read QNVS…SLSH and TGKNRTPNDGQ. Residues 63–91 show a composition bias toward acidic residues; the sequence is ESNESDGSPESDESPESEESSDNSDSSDS. Positions 239–258 are enriched in basic and acidic residues; it reads EKEKLDHKKQRSAEKVEKSH.

It belongs to the SPP381 family. As to quaternary structure, component of the U4/U6-U5 tri-snRNP complex composed of the U4, U6 and U5 snRNAs and at least PRP3, PRP4, PRP6, PRP8, PRP18, PRP31, PRP38, SNU13, SNU23, SNU66, SNU114, SPP381, SMB1, SMD1, SMD2, SMD3, SMX2, SMX3, LSM2, LSM3, LSM4, LSM5, LSM6, LSM7, LSM8, BRR2 and DIB1. Interacts with PRP38.

It localises to the nucleus. Its function is as follows. Component of the spliceosome and rRNA processing machinery. In association with the spliceosomal U4/U6.U5 tri-snRNP particle, required for splicing of pre-mRNA. The chain is Pre-mRNA-splicing factor SPP381 (SPP381) from Saccharomyces cerevisiae (strain ATCC 204508 / S288c) (Baker's yeast).